The following is a 484-amino-acid chain: UDP-N-acetylmuramate--L-alanine ligase (484 aa).

128-134 (GTHGKTT) serves as a coordination point for ATP.

Belongs to the MurCDEF family.

Its subcellular location is the cytoplasm. The enzyme catalyses UDP-N-acetyl-alpha-D-muramate + L-alanine + ATP = UDP-N-acetyl-alpha-D-muramoyl-L-alanine + ADP + phosphate + H(+). Its pathway is cell wall biogenesis; peptidoglycan biosynthesis. Cell wall formation. The chain is UDP-N-acetylmuramate--L-alanine ligase from Shewanella loihica (strain ATCC BAA-1088 / PV-4).